Consider the following 123-residue polypeptide: Large ribosomal subunit protein bL19 (123 aa).

Belongs to the bacterial ribosomal protein bL19 family.

Functionally, this protein is located at the 30S-50S ribosomal subunit interface and may play a role in the structure and function of the aminoacyl-tRNA binding site. The protein is Large ribosomal subunit protein bL19 of Acinetobacter baylyi (strain ATCC 33305 / BD413 / ADP1).